A 1612-amino-acid chain; its full sequence is DNA (cytosine-5)-methyltransferase PliMCI (1612 aa).

A DMAP1-binding domain is found at 7-101; that stretch reads CDQVIPPNVR…NGDTKEEASS (95 aa). The segment at 87-338 is disordered; that stretch reads TCSPVNGDTK…TAESKQPPLR (252 aa). The segment covering 94 to 110 has biased composition (basic and acidic residues); sequence DTKEEASSNGKDDEKAE. Residues 115 to 131 show a composition bias toward low complexity; the sequence is NGTTSNGSTTNGSSGSS. The segment covering 132-142 has biased composition (polar residues); that stretch reads KANGHTNGGYV. The segment covering 143 to 154 has biased composition (low complexity); the sequence is QSSSQEETGTSQ. Basic and acidic residues-rich tracts occupy residues 193 to 212, 222 to 232, and 260 to 289; these read VLGD…KKDV, EESATPDEKTL, and KKEE…KKEE. Residues 626–672 form a CXXC-type zinc finger; the sequence is ASERKKRCGVCEICQAPDCGKCTACKDMIKFGGSGKAKQACKDRRCP. Positions 633, 636, 639, 644, 647, 650, 666, and 671 each coordinate Zn(2+). The disordered stretch occupies residues 677–708; sequence QEADENDIDEMDNSSNKENKDEKKAKKGRKLE. Residues 678-688 are compositionally biased toward acidic residues; the sequence is EADENDIDEMD. The span at 691–708 shows a compositional bias: basic and acidic residues; the sequence is SNKENKDEKKAKKGRKLE. BAH domains lie at 743-871 and 967-1089; these read EKIE…EDYE and NYRK…EDPP. Residues 1084–1121 form a disordered region; that stretch reads CFEDPPSKSRSTRMKGKGKGKGKGKAKGKIAVEKEEEK. Positions 1093–1111 are enriched in basic residues; sequence RSTRMKGKGKGKGKGKAKG. In terms of domain architecture, SAM-dependent MTase C5-type spans 1131 to 1590; the sequence is LKCLDVFAGC…MEIKVCLQTK (460 aa). Residues 1142–1143, 1160–1161, 1182–1183, and Cys1183 contribute to the S-adenosyl-L-methionine site; these read GL, EK, and DC. The active site involves Cys1218. S-adenosyl-L-methionine is bound by residues Asn1569 and Val1571.

The protein belongs to the class I-like SAM-binding methyltransferase superfamily. C5-methyltransferase family.

The protein resides in the nucleus. The enzyme catalyses a 2'-deoxycytidine in DNA + S-adenosyl-L-methionine = a 5-methyl-2'-deoxycytidine in DNA + S-adenosyl-L-homocysteine + H(+). In terms of biological role, methylates CpG residues. This Paracentrotus lividus (Common sea urchin) protein is DNA (cytosine-5)-methyltransferase PliMCI (DNMT).